The sequence spans 372 residues: RNA polymerase sigma factor SigA (372 aa).

Positions 139–209 (LAEANLRLVV…TRAIADQART (71 aa)) are sigma-70 factor domain-2. An Interaction with polymerase core subunit RpoC motif is present at residues 163–166 (DLIQ). The segment at 218 to 294 (ETINKLIRVQ…DQDALAPSDA (77 aa)) is sigma-70 factor domain-3. The segment at 307-360 (VLDTLTDREENVLRLRFGLDDGRTRTLEEVGKVFGVTRERIRQIEAKALRKLRH) is sigma-70 factor domain-4. A DNA-binding region (H-T-H motif) is located at residues 333 to 352 (LEEVGKVFGVTRERIRQIEA).

This sequence belongs to the sigma-70 factor family. RpoD/SigA subfamily. In terms of assembly, interacts transiently with the RNA polymerase catalytic core.

The protein localises to the cytoplasm. In terms of biological role, sigma factors are initiation factors that promote the attachment of RNA polymerase to specific initiation sites and are then released. This sigma factor is the primary sigma factor during exponential growth. This Halalkalibacterium halodurans (strain ATCC BAA-125 / DSM 18197 / FERM 7344 / JCM 9153 / C-125) (Bacillus halodurans) protein is RNA polymerase sigma factor SigA.